A 596-amino-acid polypeptide reads, in one-letter code: Arginine--tRNA ligase (596 aa).

Residues 128–138 carry the 'HIGH' region motif; sequence ANPTSSLHVGH.

This sequence belongs to the class-I aminoacyl-tRNA synthetase family. Monomer.

The protein localises to the cytoplasm. It carries out the reaction tRNA(Arg) + L-arginine + ATP = L-arginyl-tRNA(Arg) + AMP + diphosphate. The protein is Arginine--tRNA ligase of Acinetobacter baumannii (strain SDF).